Reading from the N-terminus, the 526-residue chain is GMP synthase [glutamine-hydrolyzing] (526 aa).

The 199-residue stretch at 9 to 207 (RILILNFGSQ…VLDICSCQGR (199 aa)) folds into the Glutamine amidotransferase type-1 domain. The Nucleophile role is filled by Cys-86. Active-site residues include His-181 and Glu-183. The 194-residue stretch at 208 to 401 (WTPNNIKENI…LGLPFHMLYR (194 aa)) folds into the GMPS ATP-PPase domain. 235-241 (SGGVDST) is a binding site for ATP.

Homodimer.

The catalysed reaction is XMP + L-glutamine + ATP + H2O = GMP + L-glutamate + AMP + diphosphate + 2 H(+). The protein operates within purine metabolism; GMP biosynthesis; GMP from XMP (L-Gln route): step 1/1. Its function is as follows. Catalyzes the synthesis of GMP from XMP. This is GMP synthase [glutamine-hydrolyzing] from Baumannia cicadellinicola subsp. Homalodisca coagulata.